Consider the following 473-residue polypeptide: H(+)/Cl(-) exchange transporter ClcA (473 aa).

At 1 to 32 the chain is on the cytoplasmic side; it reads MKTDTSTFLAQQIVRLRRRDQIRRLMQRDKTP. A helical transmembrane segment spans residues 33–69; it reads LAILFMAAVVGTLTGLVGVAFEKAVSWVQNMRIGALV. Residues 70–76 lie on the Periplasmic side of the membrane; it reads QVADHAF. A helical membrane pass occupies residues 77–100; the sequence is LLWPLAFILSALLAMVGYFLVRKF. Positions 106–110 match the Selectivity filter part_1 motif; the sequence is GSGIP. Ser-107 serves as a coordination point for chloride. The segment at residues 109-116 is an intramembrane region (helical); the sequence is IPEIEGAL. The Cytoplasmic segment spans residues 117-123; it reads EELRPVR. Transmembrane regions (helical) follow at residues 124–141 and 148–166; these read WWRV…TLGA and EGPT…LDVF. Positions 146 to 150 match the Selectivity filter part_2 motif; sequence GREGP. Residues 167–176 lie on the Cytoplasmic side of the membrane; it reads RMRSAEARHT. Intramembrane regions (helical) lie at residues 177–189 and 193–201; these read LLAT…LSAA and PLAGILFII. Residues 202–214 lie on the Cytoplasmic side of the membrane; it reads EEMRPQFRYNLIS. A helical membrane pass occupies residues 215 to 232; sequence IKAVFTGVIMSSIVFRIF. Topologically, residues 233–252 are periplasmic; it reads NGEAPIIEVGKLSDAPVNTL. The chain crosses the membrane as a helical span at residues 253-281; the sequence is WLYLILGIIFGCVGPVFNSLVLRTQDMFQ. Residues 282-287 lie on the Cytoplasmic side of the membrane; the sequence is RFHGGE. A helical transmembrane segment spans residues 288 to 309; the sequence is IKKWVLMGGAIGGLCGILGLIE. The Periplasmic segment spans residues 310-329; sequence PEAAGGGFNLIPIAAAGNFS. 2 consecutive transmembrane segments (helical) span residues 330 to 349 and 355 to 376; these read VGLL…LCFS and GIFA…MAAA. Residues 355–359 carry the Selectivity filter part_3 motif; the sequence is GIFAP. Ile-356 and Phe-357 together coordinate chloride. The Periplasmic portion of the chain corresponds to 377 to 386; the sequence is VLFPQYHLEA. An intramembrane region (helical) is located at residues 387 to 401; it reads GTFAIAGMGALMAAS. The note=Loop between two helices intramembrane region spans 402-404; the sequence is VRA. Residues 405–416 constitute an intramembrane region (helical); the sequence is PLTGIVLVLEMT. Positions 417-421 form an intramembrane region, note=Loop between two helices; the sequence is DNYQL. Residues 422–438 traverse the membrane as a helical segment; the sequence is ILPMIITCLGATLLAQF. The Cytoplasmic segment spans residues 439–473; it reads LGGKPLYSTILARTLAKQDAEQAAKNQNASAGENT. Residue Tyr-445 coordinates chloride.

It belongs to the chloride channel (TC 2.A.49) family. ClcA subfamily. In terms of assembly, homodimer.

It is found in the cell inner membrane. The enzyme catalyses 2 chloride(in) + H(+)(out) = 2 chloride(out) + H(+)(in). Proton-coupled chloride transporter. Functions as antiport system and exchanges two chloride ions for 1 proton. Probably acts as an electrical shunt for an outwardly-directed proton pump that is linked to amino acid decarboxylation, as part of the extreme acid resistance (XAR) response. The sequence is that of H(+)/Cl(-) exchange transporter ClcA from Salmonella choleraesuis (strain SC-B67).